We begin with the raw amino-acid sequence, 336 residues long: Holliday junction branch migration complex subunit RuvB (336 aa).

The tract at residues 1–182 (MKERIVNLET…FGMSFRMQFY (182 aa)) is large ATPase domain (RuvB-L). ATP contacts are provided by residues Leu-21, Arg-22, Gly-63, Lys-66, Thr-67, Ser-68, 129–131 (EDF), Arg-172, Tyr-182, and Arg-219. Residue Thr-67 participates in Mg(2+) binding. Residues 183-253 (SPSELALIIK…ITLHALNELG (71 aa)) form a small ATPAse domain (RuvB-S) region. The interval 256 to 336 (ELGFDEADLA…IPTLNPQTLF (81 aa)) is head domain (RuvB-H). Residues Arg-310 and Arg-315 each coordinate DNA.

Belongs to the RuvB family. In terms of assembly, homohexamer. Forms an RuvA(8)-RuvB(12)-Holliday junction (HJ) complex. HJ DNA is sandwiched between 2 RuvA tetramers; dsDNA enters through RuvA and exits via RuvB. An RuvB hexamer assembles on each DNA strand where it exits the tetramer. Each RuvB hexamer is contacted by two RuvA subunits (via domain III) on 2 adjacent RuvB subunits; this complex drives branch migration. In the full resolvosome a probable DNA-RuvA(4)-RuvB(12)-RuvC(2) complex forms which resolves the HJ.

The protein localises to the cytoplasm. It catalyses the reaction ATP + H2O = ADP + phosphate + H(+). Functionally, the RuvA-RuvB-RuvC complex processes Holliday junction (HJ) DNA during genetic recombination and DNA repair, while the RuvA-RuvB complex plays an important role in the rescue of blocked DNA replication forks via replication fork reversal (RFR). RuvA specifically binds to HJ cruciform DNA, conferring on it an open structure. The RuvB hexamer acts as an ATP-dependent pump, pulling dsDNA into and through the RuvAB complex. RuvB forms 2 homohexamers on either side of HJ DNA bound by 1 or 2 RuvA tetramers; 4 subunits per hexamer contact DNA at a time. Coordinated motions by a converter formed by DNA-disengaged RuvB subunits stimulates ATP hydrolysis and nucleotide exchange. Immobilization of the converter enables RuvB to convert the ATP-contained energy into a lever motion, pulling 2 nucleotides of DNA out of the RuvA tetramer per ATP hydrolyzed, thus driving DNA branch migration. The RuvB motors rotate together with the DNA substrate, which together with the progressing nucleotide cycle form the mechanistic basis for DNA recombination by continuous HJ branch migration. Branch migration allows RuvC to scan DNA until it finds its consensus sequence, where it cleaves and resolves cruciform DNA. The polypeptide is Holliday junction branch migration complex subunit RuvB (Helicobacter pylori (strain Shi470)).